Here is a 229-residue protein sequence, read N- to C-terminus: Protein FMP52-2, mitochondrial (229 aa).

Residues 1–45 (MAAGAFILGSTGLCGYQMLRFAEKSSLFDKISTVGRKLPDFKSEK) constitute a mitochondrion transit peptide.

It belongs to the FMP52 family.

It is found in the mitochondrion outer membrane. The chain is Protein FMP52-2, mitochondrial (FMP522) from Scheffersomyces stipitis (strain ATCC 58785 / CBS 6054 / NBRC 10063 / NRRL Y-11545) (Yeast).